The following is a 504-amino-acid chain: Maturase K (504 aa).

The protein belongs to the intron maturase 2 family. MatK subfamily.

The protein resides in the plastid. The protein localises to the chloroplast. Its function is as follows. Usually encoded in the trnK tRNA gene intron. Probably assists in splicing its own and other chloroplast group II introns. This chain is Maturase K, found in Impatiens capensis (Spotted jewelweed).